The following is a 66-amino-acid chain: MSKKLKGPDGRIPDRLPDGRPAVAWERRWTEGTLPLWLVATAGGIAVIFVLGIFFYGSYQGVGAGG.

The chain crosses the membrane as a helical span at residues 36 to 56 (LWLVATAGGIAVIFVLGIFFY).

Belongs to the PsbJ family. In terms of assembly, PSII is composed of 1 copy each of membrane proteins PsbA, PsbB, PsbC, PsbD, PsbE, PsbF, PsbH, PsbI, PsbJ, PsbK, PsbL, PsbM, PsbT, PsbX, PsbY, Psb30/Ycf12, peripheral proteins PsbO, CyanoQ (PsbQ), PsbU, PsbV and a large number of cofactors. It forms dimeric complexes.

The protein localises to the cellular thylakoid membrane. One of the components of the core complex of photosystem II (PSII). PSII is a light-driven water:plastoquinone oxidoreductase that uses light energy to abstract electrons from H(2)O, generating O(2) and a proton gradient subsequently used for ATP formation. It consists of a core antenna complex that captures photons, and an electron transfer chain that converts photonic excitation into a charge separation. The chain is Photosystem II reaction center protein J from Prochlorococcus marinus (strain MIT 9215).